The sequence spans 100 residues: Integration host factor subunit beta (100 aa).

Belongs to the bacterial histone-like protein family. Heterodimer of an alpha and a beta chain.

Its function is as follows. This protein is one of the two subunits of integration host factor, a specific DNA-binding protein that functions in genetic recombination as well as in transcriptional and translational control. The chain is Integration host factor subunit beta from Rhodospirillum rubrum (strain ATCC 11170 / ATH 1.1.1 / DSM 467 / LMG 4362 / NCIMB 8255 / S1).